The following is a 388-amino-acid chain: Protein RecA (388 aa).

Residue 79–86 (GPESSGKT) participates in ATP binding. The interval 347-372 (IDGEEVSEQDTENKKDEPKKEEAVNE) is disordered. Over residues 357–369 (TENKKDEPKKEEA) the composition is skewed to basic and acidic residues.

This sequence belongs to the RecA family.

It localises to the cytoplasm. Can catalyze the hydrolysis of ATP in the presence of single-stranded DNA, the ATP-dependent uptake of single-stranded DNA by duplex DNA, and the ATP-dependent hybridization of homologous single-stranded DNAs. It interacts with LexA causing its activation and leading to its autocatalytic cleavage. In Streptococcus pneumoniae (strain CGSP14), this protein is Protein RecA.